Consider the following 85-residue polypeptide: Large ribosomal subunit protein bL27 (85 aa).

The protein belongs to the bacterial ribosomal protein bL27 family.

The protein is Large ribosomal subunit protein bL27 of Campylobacter hominis (strain ATCC BAA-381 / DSM 21671 / CCUG 45161 / LMG 19568 / NCTC 13146 / CH001A).